The sequence spans 454 residues: Argininosuccinate lyase (454 aa).

It belongs to the lyase 1 family. Argininosuccinate lyase subfamily.

The protein localises to the cytoplasm. The catalysed reaction is 2-(N(omega)-L-arginino)succinate = fumarate + L-arginine. Its pathway is amino-acid biosynthesis; L-arginine biosynthesis; L-arginine from L-ornithine and carbamoyl phosphate: step 3/3. The polypeptide is Argininosuccinate lyase (Herpetosiphon aurantiacus (strain ATCC 23779 / DSM 785 / 114-95)).